Here is a 414-residue protein sequence, read N- to C-terminus: S-adenosylmethionine synthase (414 aa).

His-11 contributes to the ATP binding site. Asp-13 is a Mg(2+) binding site. Residue Glu-39 coordinates K(+). Residues Glu-52 and Gln-95 each coordinate L-methionine. Positions 95-105 (QSPDIAQGVNL) are flexible loop. ATP-binding positions include 169 to 171 (DGK), 245 to 246 (KF), Asp-254, 260 to 261 (RK), Ala-277, and Lys-281. Asp-254 contacts L-methionine. Residue Lys-285 coordinates L-methionine.

This sequence belongs to the AdoMet synthase family. As to quaternary structure, homotetramer; dimer of dimers. It depends on Mg(2+) as a cofactor. K(+) serves as cofactor.

It is found in the cytoplasm. The enzyme catalyses L-methionine + ATP + H2O = S-adenosyl-L-methionine + phosphate + diphosphate. It functions in the pathway amino-acid biosynthesis; S-adenosyl-L-methionine biosynthesis; S-adenosyl-L-methionine from L-methionine: step 1/1. Functionally, catalyzes the formation of S-adenosylmethionine (AdoMet) from methionine and ATP. The overall synthetic reaction is composed of two sequential steps, AdoMet formation and the subsequent tripolyphosphate hydrolysis which occurs prior to release of AdoMet from the enzyme. This is S-adenosylmethionine synthase from Synechococcus sp. (strain JA-3-3Ab) (Cyanobacteria bacterium Yellowstone A-Prime).